The primary structure comprises 175 residues: Regenerating islet-derived protein 3-alpha (175 aa).

Residues 1–26 (MLPPMALPSVSWMLLSCLMLLSQVQG) form the signal peptide. A propeptide spanning residues 27–37 (EEPQRELPSAR) is cleaved from the precursor. Disulfide bonds link C40/C51, C68/C171, and C146/C163. Residues 47-172 (YGSHCYALFL…CNVRLPYVCK (126 aa)) form the C-type lectin domain. Zn(2+) contacts are provided by H50 and H107. Residues 103 to 118 (WIGLHDPTQGTEPNGE) are sufficient to activate EXTL3. An EPN motif is present at residues 114 to 116 (EPN). Zn(2+)-binding residues include E121 and H145.

As to quaternary structure, forms a hexameric membrane-permeabilizing oligomeric pore on membrane phospholipids. The hexamer is formed by three dimers related by helical symmetry. Forms filaments, filamentation traps pore complexes and limits damage to host cells. Interacts with EXTL3. In terms of processing, proteolytic processing by trypsin removes an inhibitory N-terminal propeptide and is essential for peptidoglycan binding and antibacterial activity. In terms of tissue distribution, expressed by keratinocytes. Highly expressed in epidermal keratinocytes of psoriasis patients (at protein level). Constitutively expressed in intestine. Low expression is found in healthy pancreas. Overexpressed during the acute phase of pancreatitis and in some patients with chronic pancreatitis.

The protein resides in the secreted. With respect to regulation, lipopolysaccharide inhibits pore-forming activity, explaining why is bactericidal for Gram-positive but not Gram-negative bacteria. Bactericidal C-type lectin which acts exclusively against Gram-positive bacteria and mediates bacterial killing by binding to surface-exposed carbohydrate moieties of peptidoglycan. Binds membrane phospholipids and kills bacteria by forming a hexameric membrane-permeabilizing oligomeric pore. In terms of biological role, acts as a hormone in response to different stimuli like anti-inflammatory signals, such as IL17A, or gut microbiome. Secreted by different cell types to activate its receptor EXTL3 and induce cell specific signaling pathways. Induced by IL17A in keratinocytes, regulates keratinocyte proliferation and differentiation after skin injury via activation of EXTL3-PI3K-AKT signaling pathway. In parallel, inhibits skin inflammation through the inhibition of inflammatory cytokines such as IL6 and TNF. In pancreas, is able to permealize beta-cells membrane and stimulate their proliferation. Functionally, has bacteriostatic activity. The sequence is that of Regenerating islet-derived protein 3-alpha from Homo sapiens (Human).